Reading from the N-terminus, the 396-residue chain is Putative glutamate--cysteine ligase 2-2 (396 aa).

It belongs to the glutamate--cysteine ligase type 2 family. YbdK subfamily.

It carries out the reaction L-cysteine + L-glutamate + ATP = gamma-L-glutamyl-L-cysteine + ADP + phosphate + H(+). Functionally, ATP-dependent carboxylate-amine ligase which exhibits weak glutamate--cysteine ligase activity. In Mycolicibacterium smegmatis (strain ATCC 700084 / mc(2)155) (Mycobacterium smegmatis), this protein is Putative glutamate--cysteine ligase 2-2.